The following is a 468-amino-acid chain: ATP synthase subunit beta (468 aa).

153–160 (GGAGVGKT) lines the ATP pocket.

Belongs to the ATPase alpha/beta chains family. As to quaternary structure, F-type ATPases have 2 components, CF(1) - the catalytic core - and CF(0) - the membrane proton channel. CF(1) has five subunits: alpha(3), beta(3), gamma(1), delta(1), epsilon(1). CF(0) has three main subunits: a(1), b(2) and c(9-12). The alpha and beta chains form an alternating ring which encloses part of the gamma chain. CF(1) is attached to CF(0) by a central stalk formed by the gamma and epsilon chains, while a peripheral stalk is formed by the delta and b chains.

The protein resides in the cell membrane. The enzyme catalyses ATP + H2O + 4 H(+)(in) = ADP + phosphate + 5 H(+)(out). Functionally, produces ATP from ADP in the presence of a proton gradient across the membrane. The catalytic sites are hosted primarily by the beta subunits. The chain is ATP synthase subunit beta from Ligilactobacillus salivarius (strain UCC118) (Lactobacillus salivarius).